The sequence spans 148 residues: Deoxyuridine 5'-triphosphate nucleotidohydrolase (148 aa).

DUMP-binding residues include serine 69, glycine 82, aspartate 85, tyrosine 88, arginine 137, phenylalanine 142, and glycine 143.

Belongs to the dUTPase family. As to quaternary structure, homotrimer. Requires Mg(2+) as cofactor.

The enzyme catalyses dUTP + H2O = dUMP + diphosphate + H(+). It participates in pyrimidine metabolism; dUMP biosynthesis; dUMP from dCTP (dUTP route): step 2/2. In terms of biological role, involved in nucleotide metabolism via production of dUMP, the immediate precursor of thymidine nucleotides, and decreases the intracellular concentration of dUTP so that uracil cannot be incorporated into DNA. The chain is Deoxyuridine 5'-triphosphate nucleotidohydrolase (DUT1) from Kluyveromyces lactis (strain ATCC 8585 / CBS 2359 / DSM 70799 / NBRC 1267 / NRRL Y-1140 / WM37) (Yeast).